We begin with the raw amino-acid sequence, 215 residues long: Probable transaldolase (215 aa).

The Schiff-base intermediate with substrate role is filled by Lys83.

This sequence belongs to the transaldolase family. Type 3B subfamily.

Its subcellular location is the cytoplasm. It carries out the reaction D-sedoheptulose 7-phosphate + D-glyceraldehyde 3-phosphate = D-erythrose 4-phosphate + beta-D-fructose 6-phosphate. It participates in carbohydrate degradation; pentose phosphate pathway; D-glyceraldehyde 3-phosphate and beta-D-fructose 6-phosphate from D-ribose 5-phosphate and D-xylulose 5-phosphate (non-oxidative stage): step 2/3. In terms of biological role, transaldolase is important for the balance of metabolites in the pentose-phosphate pathway. This Methanococcus maripaludis (strain C7 / ATCC BAA-1331) protein is Probable transaldolase.